Consider the following 440-residue polypeptide: 3-phosphoshikimate 1-carboxyvinyltransferase (440 aa).

Residues Lys26, Ser27, and Arg31 each coordinate 3-phosphoshikimate. Lys26 lines the phosphoenolpyruvate pocket. Gly100 and Arg134 together coordinate phosphoenolpyruvate. 3-phosphoshikimate contacts are provided by Ser180, Ser181, Gln182, Ser208, Asp323, Asn346, and Lys350. A phosphoenolpyruvate-binding site is contributed by Gln182. Asp323 functions as the Proton acceptor in the catalytic mechanism. Positions 354, 398, and 423 each coordinate phosphoenolpyruvate.

Belongs to the EPSP synthase family. As to quaternary structure, monomer.

The protein resides in the cytoplasm. The enzyme catalyses 3-phosphoshikimate + phosphoenolpyruvate = 5-O-(1-carboxyvinyl)-3-phosphoshikimate + phosphate. The protein operates within metabolic intermediate biosynthesis; chorismate biosynthesis; chorismate from D-erythrose 4-phosphate and phosphoenolpyruvate: step 6/7. Its function is as follows. Catalyzes the transfer of the enolpyruvyl moiety of phosphoenolpyruvate (PEP) to the 5-hydroxyl of shikimate-3-phosphate (S3P) to produce enolpyruvyl shikimate-3-phosphate and inorganic phosphate. This chain is 3-phosphoshikimate 1-carboxyvinyltransferase, found in Pasteurella multocida (strain Pm70).